The chain runs to 351 residues: Serine protease inhibitor dipetalogastin (351 aa).

The propeptide occupies 1 to 131 (LIKELVNMVI…AETTNAMEVL (131 aa)). Kazal-like domains follow at residues 19-69 (KELK…PCDE), 72-122 (HDFE…ECHA), 131-181 (LFQG…PCDE), 184-234 (HDFE…ECHP), 240-289 (QLIL…ECKV), and 297-347 (GEVR…RCLP). Disulfide bonds link cysteine 25–cysteine 50, cysteine 27–cysteine 46, cysteine 35–cysteine 67, cysteine 78–cysteine 103, cysteine 80–cysteine 99, cysteine 88–cysteine 120, cysteine 137–cysteine 162, cysteine 139–cysteine 158, cysteine 147–cysteine 179, cysteine 190–cysteine 215, cysteine 192–cysteine 211, cysteine 200–cysteine 232, cysteine 246–cysteine 271, cysteine 248–cysteine 267, cysteine 256–cysteine 287, cysteine 303–cysteine 328, cysteine 305–cysteine 324, and cysteine 313–cysteine 345.

It localises to the secreted. Functionally, thrombin inhibitor. Prevents blood clotting to allow insect to feed on blood. Also functions as an inhibitor of trypsin and plasmin. The sequence is that of Serine protease inhibitor dipetalogastin from Dipetalogaster maximus (Blood-sucking bug).